Consider the following 454-residue polypeptide: Tyrosine aminotransferase (454 aa).

Met-1 bears the N-acetylmethionine mark. The residue at position 280 (Lys-280) is an N6-(pyridoxal phosphate)lysine. At Ser-448 the chain carries Phosphoserine.

The protein belongs to the class-I pyridoxal-phosphate-dependent aminotransferase family. In terms of assembly, homodimer. The cofactor is pyridoxal 5'-phosphate.

The enzyme catalyses L-tyrosine + 2-oxoglutarate = 3-(4-hydroxyphenyl)pyruvate + L-glutamate. It functions in the pathway amino-acid degradation; L-phenylalanine degradation; acetoacetate and fumarate from L-phenylalanine: step 2/6. In terms of biological role, transaminase involved in tyrosine breakdown. Converts tyrosine to p-hydroxyphenylpyruvate. Can catalyze the reverse reaction, using glutamic acid, with 2-oxoglutarate as cosubstrate (in vitro). Has much lower affinity and transaminase activity for phenylalanine. This chain is Tyrosine aminotransferase (Tat), found in Mus musculus (Mouse).